The sequence spans 148 residues: Cytochrome c oxidase subunit 6, mitochondrial (148 aa).

The transit peptide at 1 to 40 (MLSRAIFRNPVINRTLLRARPGAYHATRLTKNTFIQSRKY) directs the protein to the mitochondrion.

It belongs to the cytochrome c oxidase subunit 5A family. In terms of assembly, component of the cytochrome c oxidase (complex IV, CIV), a multisubunit enzyme composed of 12 subunits. The complex is composed of a catalytic core of 3 subunits COX1, COX2 and COX3, encoded in the mitochondrial DNA, and 9 supernumerary subunits COX4, COX5A (or COX5B), COX6, COX7, COX8, COX9, COX12, COX13 and COX26, which are encoded in the nuclear genome. The complex exists as a monomer or a dimer and forms supercomplexes (SCs) in the inner mitochondrial membrane with a dimer of ubiquinol-cytochrome c oxidoreductase (cytochrome b-c1 complex, complex III, CIII), resulting in 2 different assemblies (supercomplexes III(2)IV and III(2)IV(2)). COX26 interacts with COX1, COX2, COX6 and COX9.

Its subcellular location is the mitochondrion inner membrane. It functions in the pathway energy metabolism; oxidative phosphorylation. Functionally, component of the cytochrome c oxidase, the last enzyme in the mitochondrial electron transport chain which drives oxidative phosphorylation. The respiratory chain contains 3 multisubunit complexes succinate dehydrogenase (complex II, CII), ubiquinol-cytochrome c oxidoreductase (cytochrome b-c1 complex, complex III, CIII) and cytochrome c oxidase (complex IV, CIV), that cooperate to transfer electrons derived from NADH and succinate to molecular oxygen, creating an electrochemical gradient over the inner membrane that drives transmembrane transport and the ATP synthase. Cytochrome c oxidase is the component of the respiratory chain that catalyzes the reduction of oxygen to water. Electrons originating from reduced cytochrome c in the intermembrane space (IMS) are transferred via the dinuclear copper A center (CU(A)) of COX2 and heme A of COX1 to the active site in COX1, a binuclear center (BNC) formed by heme A3 and copper B (CU(B)). The BNC reduces molecular oxygen to 2 water molecules using 4 electrons from cytochrome c in the IMS and 4 protons from the mitochondrial matrix. COX6 may stabilize the region of CIV at the interface with CIII, supporting a role in formation or stability of the CIII(2)IV(2) SC. In Saccharomyces cerevisiae (strain ATCC 204508 / S288c) (Baker's yeast), this protein is Cytochrome c oxidase subunit 6, mitochondrial (COX6).